The sequence spans 91 residues: Preprofallaxidin-2 (91 aa).

An N-terminal signal peptide occupies residues 1–22; the sequence is MASLKKSLFLVLFLGLVSLSIC. A propeptide spanning residues 23 to 49 is cleaved from the precursor; it reads EKEKRENEGNENEEEEENHEEGSEEKR. The interval 24–49 is disordered; that stretch reads KEKRENEGNENEEEEENHEEGSEEKR. The span at 31 to 41 shows a compositional bias: acidic residues; the sequence is GNENEEEEENH. Position 65 is a leucine amide (Leu65). A propeptide spanning residues 69–73 is cleaved from the precursor; that stretch reads SEEKR. Leu89 carries the post-translational modification Leucine amide.

It belongs to the frog skin active peptide (FSAP) family. Dermaseptin subfamily. Expressed by the skin glands.

The protein resides in the secreted. In terms of biological role, fallaxidin-3.1 shows antibacterial activity against the Gram-positive bacteria E.faecalis (MIC=100 uM) and L.lactis (MIC=100 uM). No antibacterial activity against the Gram-positive bacteria B.cereus, L.innocua, M.luteus, S.epidermidis, S.uberis and S.aureus, or the Gram-negative bacteria E.cloacae and E.coli. Fallaxidin-3.2 shows antibacterial activity against the Gram-positive bacteria E.faecalis (MIC=100 uM) and L.lactis (MIC=500 uM). No antibacterial activity against the Gram-positive bacteria B.cereus, L.innocua, M.luteus, S.epidermidis, S.uberis and S.aureus, or the Gram-negative bacteria E.cloacae and E.coli. The polypeptide is Preprofallaxidin-2 (Litoria fallax (Eastern dwarf tree frog)).